A 350-amino-acid polypeptide reads, in one-letter code: Thymidine kinase (350 aa).

17-24 (GPFGIGKT) lines the ATP pocket. Catalysis depends on Glu45, which acts as the Proton acceptor. A substrate-binding site is contributed by Gln86. An ATP-binding site is contributed by Arg176. Arg182 contacts substrate.

Belongs to the herpesviridae thymidine kinase family. In terms of assembly, homodimer.

It carries out the reaction thymidine + ATP = dTMP + ADP + H(+). Its function is as follows. Catalyzes the transfer of the gamma-phospho group of ATP to thymidine to generate dTMP in the salvage pathway of pyrimidine synthesis. The dTMP serves as a substrate for DNA polymerase during viral DNA replication. Allows the virus to be reactivated and to grow in non-proliferative cells lacking a high concentration of phosphorylated nucleic acid precursors. The sequence is that of Thymidine kinase from Gallus gallus (Chicken).